A 1087-amino-acid chain; its full sequence is Ubiquitin-associated protein 2-like (1087 aa).

The residue at position 1 (methionine 1) is an N-acetylmethionine. Positions 1–33 (MMTSVGTNRARGNWEQPQNQNQTQHKQRPQATA) are disordered. The 41-residue stretch at 49 to 89 (DFEEKVKQLIDITGKNQDECVIALHDCNGDVNRAINVLLEG) folds into the UBA domain. The disordered stretch occupies residues 92–234 (DTHSWEMVGK…TGHFEPDDGT (143 aa)). Basic and acidic residues predominate over residues 118 to 132 (EEGKENRDRDRDYSR). Positions 133-145 (RRGGPPRRGRGAS) are enriched in basic residues. Asymmetric dimethylarginine occurs at positions 187 and 190. The segment covering 213–226 (NYGNSSGNTWNNTG) has biased composition (low complexity). Serine 356 and serine 360 each carry phosphoserine. Residues 377-389 (AQHSQSGSTTTSS) are compositionally biased toward low complexity. The segment at 377 to 420 (AQHSQSGSTTTSSWDMGSTTQSPSLVQYDLKNPSDSAVHSPFTK) is disordered. Positions 390–401 (WDMGSTTQSPSL) are enriched in polar residues. 2 positions are modified to phosphoserine: serine 410 and serine 416. Threonine 425 carries the phosphothreonine modification. A phosphoserine mark is found at serine 439, serine 454, serine 467, serine 470, serine 471, and serine 477. Disordered stretches follow at residues 440–493 (PAVA…KKAS), 530–656 (SDYE…IPPL), and 669–794 (TNQH…LPPG). Composition is skewed to low complexity over residues 474–485 (QSSSPQPAQQKL) and 534–569 (STPTTSASSSQAPSSLYTSTASESSSTISSNQSQES). A compositionally biased stretch (polar residues) spans 570–656 (GYQSGPIQST…SPSTSSIPPL (87 aa)). A phosphoserine mark is found at serine 604, serine 605, serine 608, and serine 609. A compositionally biased stretch (low complexity) spans 688–784 (TTTTQHSSTL…STRSSVATTS (97 aa)). A phosphoserine mark is found at serine 852 and serine 859. The tract at residues 865–901 (FGRGDASSPAPATTLAQPQQNQTQTHHTTQQTFLNPA) is disordered. Low complexity predominate over residues 873 to 896 (PAPATTLAQPQQNQTQTHHTTQQT). 2 positions are modified to omega-N-methylarginine: serine 962 and valine 969. Valine 969 and threonine 976 each carry N6-acetyllysine. Residues 1040–1087 (QQPHSQILHHHLQQDGQTGSGQRSQTSSIPQKPQTNKSAYNSYSWGAN) form a disordered region. The span at 1053-1067 (QDGQTGSGQRSQTSS) shows a compositional bias: low complexity. The span at 1068–1087 (IPQKPQTNKSAYNSYSWGAN) shows a compositional bias: polar residues.

As to quaternary structure, interacts with BMI1. Part of a complex consisting of UBAP2L, BMI1 and RNF2. Interacts with G3BP1 (via NTF2 domain); promoting stress granule formation. In terms of processing, acetylated. In terms of tissue distribution, ubiquitous.

The protein resides in the nucleus. It is found in the chromosome. Its subcellular location is the cytoplasm. The protein localises to the stress granule. In terms of biological role, recruits the ubiquitination machinery to RNA polymerase II for polyubiquitination, removal and degradation, when the transcription-coupled nucleotide excision repair (TC-NER) machinery fails to resolve DNA damage. Plays an important role in the activity of long-term repopulating hematopoietic stem cells (LT-HSCs). Is a regulator of stress granule assembly, required for their efficient formation. Required for proper brain development and neocortex lamination. This Homo sapiens (Human) protein is Ubiquitin-associated protein 2-like.